The sequence spans 158 residues: Endoribonuclease YbeY (158 aa).

The Zn(2+) site is built by His119, His123, and Asp129.

This sequence belongs to the endoribonuclease YbeY family. The cofactor is Zn(2+).

It localises to the cytoplasm. Single strand-specific metallo-endoribonuclease involved in late-stage 70S ribosome quality control and in maturation of the 3' terminus of the 16S rRNA. In Chlamydia abortus (strain DSM 27085 / S26/3) (Chlamydophila abortus), this protein is Endoribonuclease YbeY.